The primary structure comprises 126 residues: Protein Wnt-1 (126 aa).

The O-palmitoleoyl serine; by PORCN moiety is linked to residue serine 1. An intrachain disulfide couples cysteine 92 to cysteine 107. 2 N-linked (GlcNAc...) asparagine glycosylation sites follow: asparagine 93 and asparagine 123.

This sequence belongs to the Wnt family. Post-translationally, palmitoleoylation is required for efficient binding to frizzled receptors. Palmitoleoylation is necessary for proper trafficking to cell surface. Depalmitoleoylated by NOTUM, leading to inhibit Wnt signaling pathway.

Its subcellular location is the secreted. The protein resides in the extracellular space. The protein localises to the extracellular matrix. Functionally, ligand for members of the frizzled family of seven transmembrane receptors. Acts in the canonical Wnt signaling pathway by promoting beta-catenin-dependent transcriptional activation. Plays an essential role in the development of the embryonic brain and central nervous system (CNS). Has a role in osteoblast function, bone development and bone homeostasis. The polypeptide is Protein Wnt-1 (WNT-1) (Sceloporus occidentalis (Western fence lizard)).